A 1321-amino-acid polypeptide reads, in one-letter code: Bile salt export pump (1321 aa).

Residues 1–62 (MSDSVILRSV…FSSWTDIWLM (62 aa)) are Cytoplasmic-facing. Residues 62–385 (MCMGSLCACI…ASPCLEAFAA (324 aa)) form the ABC transmembrane type-1 1 domain. Residues 63-83 (CMGSLCACIHGIAQPGVLLIF) form a helical membrane-spanning segment. Topologically, residues 84–147 (GTMTDVFIDY…MIRFAGYYAG (64 aa)) are extracellular. Asn-109, Asn-116, Asn-122, and Asn-125 each carry an N-linked (GlcNAc...) asparagine glycan. Residues 148–168 (IGIAVLTTGYIQICFWGIAAA) form a helical membrane-spanning segment. The Cytoplasmic segment spans residues 169-215 (HQIQKMRKSYFRKIMRMGIGWVDCNSVGKLNTPFSVDFNKINDSSAD). Residues 216-236 (QLAIFIQGMTSPIFGFLVGFS) form a helical membrane-spanning segment. Topologically, residues 237–240 (QWWK) are extracellular. Residues 241–261 (LTLVIISVSPLIGLGAAIIGL) traverse the membrane as a helical segment. Residues 262–319 (SVSKFTDYELKAYAKAGSVADEVISSMRTVAAFGGEKKEVERYEKNLVFAQRWGIRKG) are Cytoplasmic-facing. A helical membrane pass occupies residues 320 to 340 (IVMGFFTGYMWCLIFFCYALA). Topologically, residues 341–353 (FWYGSKLVLEEGE) are extracellular. Residues 354 to 374 (YSPGALVQIFLSVIIGALNLG) traverse the membrane as a helical segment. Topologically, residues 375–755 (NASPCLEAFA…KLNAPEWPYM (381 aa)) are cytoplasmic. The region spanning 420-656 (IEFHNVTFHY…KGVYFALVTL (237 aa)) is the ABC transporter 1 domain. 455–462 (GPSGAGKS) lines the ATP pocket. A Phosphothreonine modification is found at Thr-586. Ser-587 carries the phosphoserine modification. The interval 651-672 (FALVTLQSQRNQGDQEENEKDA) is interaction with HAX1. Positions 659–735 (QRNQGDQEEN…KDKDLPAQED (77 aa)) are disordered. Residues 664–677 (DQEENEKDATEDDI) are compositionally biased toward acidic residues. 3 positions are modified to phosphoserine: Ser-690, Ser-701, and Ser-704. Over residues 714–731 (VEDHKSTHEEDRKDKDLP) the composition is skewed to basic and acidic residues. The ABC transmembrane type-1 2 domain occupies 755–1043 (MLLGSMGAAV…ASSYTPSYAK (289 aa)). The chain crosses the membrane as a helical span at residues 756–776 (LLGSMGAAVNGAVTPLYAFLF). Topologically, residues 777-794 (SQILGTFSLPDKEEQRSQ) are extracellular. Residues 795–815 (INGICLLFVTLGCVSFFTQFL) form a helical membrane-spanning segment. Topologically, residues 816 to 869 (QGYTFAKSGELLTKRLRKFGFRAMLGQDIGWFDDLRNSPGALTTRLATDASQVQ) are cytoplasmic. The next 2 membrane-spanning stretches (helical) occupy residues 870 to 890 (GATG…TVAM) and 891 to 911 (IIAF…FPFL). Residues 912-979 (ALSGALQTKM…PYKMAIKKAN (68 aa)) are Cytoplasmic-facing. A helical membrane pass occupies residues 980–1000 (VYGLCFGFSQCITFIANSASY). Topologically, residues 1001–1011 (RYGGYLISNEG) are extracellular. Residues 1012–1032 (LHFSYVFRVISAVVLSATALG) traverse the membrane as a helical segment. Residues 1033–1321 (RASSYTPSYA…KLVTTGSPIS (289 aa)) lie on the Cytoplasmic side of the membrane. The ABC transporter 2 domain occupies 1078-1316 (IDFVDCKFTY…KGAYYKLVTT (239 aa)). 1113–1120 (GSSGCGKS) contributes to the ATP binding site. 2 positions are modified to phosphoserine: Ser-1214 and Ser-1321.

Belongs to the ABC transporter superfamily. ABCB family. Multidrug resistance exporter (TC 3.A.1.201) subfamily. In terms of assembly, interacts with HAX1. Interacts with the adapter protein complex 2 (AP-2) throught AP2A2 or AP2A1; this interaction regulates cell membrane expression of ABCB11 through its internalization in a clathrin-dependent manner and its subsequent degradation. In terms of processing, N-glycosylated. Ubiquitinated; short-chain ubiquitination regulates cell-Surface expression of ABCB11. In terms of tissue distribution, expressed predominantly, if not exclusively in the liver, where it was further localized to the canalicular microvilli and to subcanalicular vesicles of the hepatocytes by in situ.

Its subcellular location is the apical cell membrane. The protein resides in the recycling endosome membrane. It is found in the endosome. It localises to the cell membrane. The catalysed reaction is cholate(in) + ATP + H2O = cholate(out) + ADP + phosphate + H(+). It carries out the reaction taurocholate(in) + ATP + H2O = taurocholate(out) + ADP + phosphate + H(+). The enzyme catalyses glycocholate(in) + ATP + H2O = glycocholate(out) + ADP + phosphate + H(+). It catalyses the reaction glycochenodeoxycholate(in) + ATP + H2O = glycochenodeoxycholate(out) + ADP + phosphate + H(+). The catalysed reaction is taurochenodeoxycholate(in) + ATP + H2O = taurochenodeoxycholate(out) + ADP + phosphate + H(+). It carries out the reaction glycoursodeoxycholate(in) + ATP + H2O = glycoursodeoxycholate(out) + ADP + phosphate + H(+). The enzyme catalyses tauroursodeoxycholate(in) + ATP + H2O = tauroursodeoxycholate(out) + ADP + phosphate + H(+). It catalyses the reaction taurodeoxycholate(in) + ATP + H2O = taurodeoxycholate(out) + ADP + phosphate + H(+). The catalysed reaction is taurolithocholate 3-sulfate(in) + ATP + H2O = taurolithocholate 3-sulfate(out) + ADP + phosphate + H(+). It carries out the reaction pravastatin(in) + ATP + H2O = pravastatin(out) + ADP + phosphate + H(+). With respect to regulation, the uptake of taurocholate is inhibited by taurolithocholate sulfate with an IC(50) of 9 uM. Pravastatin competitively inhibits the transport of taurocholic acid. Cyclosporin A, glibenclamide, rifampicin and troglitazonestrongly competitively inhibit the transport activity of taurocholate. The canalicular transport activity of taurocholate is strongly dependent on canalicular membrane cholesterol content. The uptake of taurocholate is increased by short- and medium-chain fatty acids. Cholesterol increases transport capacity of taurocholate without affecting the affinity for the substrate. Catalyzes the transport of the major hydrophobic bile salts, such as taurine and glycine-conjugated cholic acid across the canalicular membrane of hepatocytes in an ATP-dependent manner, therefore participates in hepatic bile acid homeostasis and consequently to lipid homeostasis through regulation of biliary lipid secretion in a bile salts dependent manner. Transports taurine-conjugated bile salts more rapidly than glycine-conjugated bile salts. Also transports non-bile acid compounds, such as pravastatin and fexofenadine in an ATP-dependent manner and may be involved in their biliary excretion. In Oryctolagus cuniculus (Rabbit), this protein is Bile salt export pump.